Consider the following 935-residue polypeptide: Isoleucine--tRNA ligase (935 aa).

A 'HIGH' region motif is present at residues 58-68 (PYANGSIHVGH). Residue Glu558 participates in L-isoleucyl-5'-AMP binding. Positions 599–603 (KMSKS) match the 'KMSKS' region motif. ATP is bound at residue Lys602. Residues Cys897, Cys900, Cys917, and Cys920 each coordinate Zn(2+).

This sequence belongs to the class-I aminoacyl-tRNA synthetase family. IleS type 1 subfamily. Monomer. Zn(2+) serves as cofactor.

It localises to the cytoplasm. The enzyme catalyses tRNA(Ile) + L-isoleucine + ATP = L-isoleucyl-tRNA(Ile) + AMP + diphosphate. Catalyzes the attachment of isoleucine to tRNA(Ile). As IleRS can inadvertently accommodate and process structurally similar amino acids such as valine, to avoid such errors it has two additional distinct tRNA(Ile)-dependent editing activities. One activity is designated as 'pretransfer' editing and involves the hydrolysis of activated Val-AMP. The other activity is designated 'posttransfer' editing and involves deacylation of mischarged Val-tRNA(Ile). This Francisella tularensis subsp. holarctica (strain OSU18) protein is Isoleucine--tRNA ligase.